Reading from the N-terminus, the 243-residue chain is MSLVLLPAVDVADGQAVRLVQGKAGSETTYGSPRDAALAWQNDGAEWVHLVDLDAAFGRGSNRELLAQVVGELDVKVELSGGIRDDEALTAALATGCARVNLGTAALEDPEWCASAIARHGERVAVGLDVEIVEGAHRLRGRGWVSDGGDLWEVLERLRAQGCSRYVVTDVTKDGTLTGPNLELLAQVAGVANAPVIASGGVSSLDDLRAIAELTGAGVEGAIVGKALYAGRFTLPDAIAAVS.

The active-site Proton acceptor is Asp-10. Catalysis depends on Asp-129, which acts as the Proton donor.

Belongs to the HisA/HisF family.

The protein resides in the cytoplasm. The enzyme catalyses 1-(5-phospho-beta-D-ribosyl)-5-[(5-phospho-beta-D-ribosylamino)methylideneamino]imidazole-4-carboxamide = 5-[(5-phospho-1-deoxy-D-ribulos-1-ylimino)methylamino]-1-(5-phospho-beta-D-ribosyl)imidazole-4-carboxamide. The catalysed reaction is N-(5-phospho-beta-D-ribosyl)anthranilate = 1-(2-carboxyphenylamino)-1-deoxy-D-ribulose 5-phosphate. It participates in amino-acid biosynthesis; L-histidine biosynthesis; L-histidine from 5-phospho-alpha-D-ribose 1-diphosphate: step 4/9. The protein operates within amino-acid biosynthesis; L-tryptophan biosynthesis; L-tryptophan from chorismate: step 3/5. Its function is as follows. Involved in both the histidine and tryptophan biosynthetic pathways. The chain is Phosphoribosyl isomerase A from Mycobacteroides abscessus (strain ATCC 19977 / DSM 44196 / CCUG 20993 / CIP 104536 / JCM 13569 / NCTC 13031 / TMC 1543 / L948) (Mycobacterium abscessus).